A 133-amino-acid polypeptide reads, in one-letter code: Putative actin-depolymerizing factor 11 (133 aa).

The ADF-H domain occupies 1–133; the sequence is MVLHDDCKLT…SLDAIRRRIN (133 aa).

Belongs to the actin-binding proteins ADF family.

Its subcellular location is the cytoplasm. It localises to the cytoskeleton. Its function is as follows. Actin-depolymerizing protein. Severs actin filaments (F-actin) and binds to actin monomers. The protein is Putative actin-depolymerizing factor 11 (ADF11) of Arabidopsis thaliana (Mouse-ear cress).